We begin with the raw amino-acid sequence, 888 residues long: Patched domain-containing protein 1 (888 aa).

Residues 20–40 (FIASHPVFFASAPVLISILLG) traverse the membrane as a helical segment. 3 N-linked (GlcNAc...) asparagine glycosylation sites follow: Asn-77, Asn-133, and Asn-167. In terms of domain architecture, SSD spans 268–427 (SERYLVTSLI…LSFYGSSLVF (160 aa)). The next 2 helical transmembrane spans lie at 273 to 293 (VTSL…QDCV) and 298 to 318 (WLGL…AGII). Asn-319 and Asn-326 each carry an N-linked (GlcNAc...) asparagine glycan. Helical transmembrane passes span 328–348 (TFLG…FEML), 373–393 (LSFS…ASPF), 407–427 (CIAI…SLVF), and 502–522 (PFVV…YLQV). 3 N-linked (GlcNAc...) asparagine glycosylation sites follow: Asn-568, Asn-599, and Asn-608. 2 consecutive transmembrane segments (helical) span residues 707–727 (ALFL…NVWI) and 738–758 (VIGF…LCLI). Asn-762 is a glycosylation site (N-linked (GlcNAc...) asparagine). Residues 795–815 (GVAILQSYLCYIVGLFPLAAV) form a helical membrane-spanning segment. N-linked (GlcNAc...) asparagine glycosylation is present at Asn-818. Residues 826–846 (CLFLIAFVTFFHCFAILPVIL) form a helical membrane-spanning segment.

The protein belongs to the patched family. Broadly expressed in the brain. Selectively expressed in the thalamic reticular nucleus (TRN) in early development and continues to be enriched in this structure throughout adult life.

It localises to the cell membrane. The protein resides in the cell projection. It is found in the dendritic spine. Functionally, required for the development and function of the thalamic reticular nucleus (TRN), a part of the thalamus that is critical for thalamocortical transmission, generation of sleep rhythms, sensorimotor processing and attention. Can bind cholesterol in vitro. This is Patched domain-containing protein 1 from Mus musculus (Mouse).